The primary structure comprises 161 residues: Urease accessory protein UreE (161 aa).

The segment at 138 to 161 (RGAYHAHGGHSHDHGQGHHHHDHG) is disordered.

It belongs to the UreE family.

The protein resides in the cytoplasm. In terms of biological role, involved in urease metallocenter assembly. Binds nickel. Probably functions as a nickel donor during metallocenter assembly. The polypeptide is Urease accessory protein UreE (Agrobacterium fabrum (strain C58 / ATCC 33970) (Agrobacterium tumefaciens (strain C58))).